The primary structure comprises 100 residues: Large ribosomal subunit protein bL28 (100 aa).

The segment at 1–21 is disordered; sequence MSRVCDITGQGKSFGNKVSHS. Positions 10–19 are enriched in polar residues; it reads QGKSFGNKVS.

The protein belongs to the bacterial ribosomal protein bL28 family.

This chain is Large ribosomal subunit protein bL28, found in Ehrlichia canis (strain Jake).